Consider the following 359-residue polypeptide: Peptide chain release factor 1 (359 aa).

Position 235 is an N5-methylglutamine (glutamine 235). The interval 285–305 (KRDSEISQMRKSQIGSGDRSE) is disordered. A compositionally biased stretch (polar residues) spans 290-299 (ISQMRKSQIG).

Belongs to the prokaryotic/mitochondrial release factor family. In terms of processing, methylated by PrmC. Methylation increases the termination efficiency of RF1.

The protein localises to the cytoplasm. Its function is as follows. Peptide chain release factor 1 directs the termination of translation in response to the peptide chain termination codons UAG and UAA. This Ehrlichia canis (strain Jake) protein is Peptide chain release factor 1.